We begin with the raw amino-acid sequence, 431 residues long: Glucose-1-phosphate adenylyltransferase (431 aa).

Lys39 is a binding site for beta-D-fructose 1,6-bisphosphate. Arg40, His46, and Arg52 together coordinate AMP. Tyr114 is an alpha-D-glucose 1-phosphate binding site. Arg130 is a binding site for AMP. Alpha-D-glucose 1-phosphate contacts are provided by residues Gly179, 194–195, and Ser212; that span reads EK. AMP is bound by residues Glu370 and Arg386. Beta-D-fructose 1,6-bisphosphate-binding positions include 419-423 and 429-431; these read REMLR and QER.

The protein belongs to the bacterial/plant glucose-1-phosphate adenylyltransferase family. In terms of assembly, homotetramer.

The catalysed reaction is alpha-D-glucose 1-phosphate + ATP + H(+) = ADP-alpha-D-glucose + diphosphate. It participates in glycan biosynthesis; glycogen biosynthesis. Its activity is regulated as follows. Allosterically activated by fructose-1,6-bisphosphate (F16BP) and inhibited by AMP. Its function is as follows. Involved in the biosynthesis of ADP-glucose, a building block required for the elongation reactions to produce glycogen. Catalyzes the reaction between ATP and alpha-D-glucose 1-phosphate (G1P) to produce pyrophosphate and ADP-Glc. This Escherichia coli O7:K1 (strain IAI39 / ExPEC) protein is Glucose-1-phosphate adenylyltransferase.